The primary structure comprises 166 residues: UPF0304 protein PBPRA2768 (166 aa).

This sequence belongs to the UPF0304 family.

The sequence is that of UPF0304 protein PBPRA2768 from Photobacterium profundum (strain SS9).